The following is a 318-amino-acid chain: Glycine--tRNA ligase alpha subunit (318 aa).

The protein belongs to the class-II aminoacyl-tRNA synthetase family. As to quaternary structure, tetramer of two alpha and two beta subunits.

The protein localises to the cytoplasm. The enzyme catalyses tRNA(Gly) + glycine + ATP = glycyl-tRNA(Gly) + AMP + diphosphate. This Methylibium petroleiphilum (strain ATCC BAA-1232 / LMG 22953 / PM1) protein is Glycine--tRNA ligase alpha subunit.